The chain runs to 380 residues: Tetratricopeptide repeat protein 19, mitochondrial (380 aa).

The N-terminal 70 residues, 1–70 (MFRLLSWSLG…AALAWFSRPA (70 aa)), are a transit peptide targeting the mitochondrion. 5 TPR repeats span residues 136–169 (TYTY…LLGG), 179–212 (IEIS…LEEK), 237–270 (GMCL…SEEI), 279–312 (IVLM…ARQI), and 318–351 (HMVL…AKLK).

Belongs to the TTC19 family. In terms of assembly, binds to the mature mitochondrial complex III dimer, after the incorporation of the Rieske protein UQCRFS1. Interacts with UQCRC1 and UQCRFS1. Interacts with ZFYVE26 and CHMP4B. Proteolytically cleaved by PARL.

It is found in the mitochondrion inner membrane. Functionally, required for the preservation of the structural and functional integrity of mitochondrial respiratory complex III by allowing the physiological turnover of the Rieske protein UQCRFS1. Involved in the clearance of UQCRFS1 N-terminal fragments, which are produced upon incorporation of UQCRFS1 into the complex III and whose presence is detrimental for its catalytic activity. In Homo sapiens (Human), this protein is Tetratricopeptide repeat protein 19, mitochondrial (TTC19).